The primary structure comprises 450 residues: Immunoglobulin G-binding protein A (450 aa).

The first 36 residues, 1 to 36 (MKKKNIYSIRKLGVGIASVTLGTLLISGGVTPAANA), serve as a signal peptide directing secretion. A YSIRK-G/S signaling motif motif is present at residues 7 to 18 (YSIRKLGVGIAS). Residues 37–92 (AQHDEAQQNAFYQVLNMPNLNADQRNGFIQSLKDDPSQSANVLGEAQKLNDSQAPK) form an Immunoglobulin-binding region E repeat. The stretch at 93–153 (ADAQQNNFNK…KKLNESQAPK (61 aa)) is one Immunoglobulin-binding region D repeat. One copy of the Immunoglobulin-binding region A repeat lies at 154 to 211 (ADNNFNKEQQNAFYEILNMPNLNEEQRNGFIQSLKDDPSQSANLLSEAKKLNESQAPK). An Immunoglobulin-binding region B/C repeat occupies 212-269 (ADNKFNKEQQNAFYEILHLPNLNEEQRNGFIQSLKDDPSVSKEILAEAKKLNDAQAPK). The segment covering 260-354 (KKLNDAQAPK…GNKPGKEDGN (95 aa)) has biased composition (basic and acidic residues). Disordered stretches follow at residues 260-365 (KKLN…GDTV) and 401-421 (KKQP…ETGE). 11 repeat units span residues 268-275 (PKEEDNKK), 276-283 (PGKEDGNK), 284-291 (PGKEDGNK), 292-299 (PGKEDNKK), 300-307 (PGKEDGNK), 308-315 (PGKEDNNK), 316-323 (PGKEDGNK), 324-331 (PGKEDNNK), 332-339 (PGKEDGNK), 340-347 (PGKEDGNK), and 348-355 (PGKEDGNG). The segment at 268 to 355 (PKEEDNKKPG…NKPGKEDGNG (88 aa)) is 12 X 8 AA approximate tandem repeats. A LysM domain is found at 355–399 (GVHVVKPGDTVNDIAKANGTTADKIAADNKLADKNMIKPGQELVV). The LPXTG sorting signal signature appears at 416 to 420 (LPETG). Pentaglycyl murein peptidoglycan amidated threonine is present on Thr419. Residues 420 to 450 (GEENPFIGTTVFGGLSLALGAALLAGRRREL) constitute a propeptide, removed by sortase.

This sequence belongs to the immunoglobulin-binding protein SpA family. In terms of assembly, interacts with host TNFRSF1A; this interaction leads to the stimulation of both surface expression and shedding of TNFRSF1A.

The protein localises to the secreted. The protein resides in the cell wall. Functionally, plays a role in the inhibition of the host innate and adaptive immune responses. Possesses five immunoglobulin-binding domains that capture both the fragment crystallizable region (Fc region) and the Fab region (part of Ig that identifies antigen) of immunoglobulins. In turn, Staphylococcus aureus is protected from phagocytic killing via inhibition of Ig Fc region. In addition, the host elicited B-cell response is prevented due to a decrease of antibody-secreting cell proliferation that enter the bone marrow, thereby decreasing long-term antibody production. Inhibits osteogenesis by preventing osteoblast proliferation and expression of alkaline phosphatase, type I collagen, osteopontin and osteocalcin. Acts directly as a pro-inflammatory factor in the lung through its ability to bind and activate tumor necrosis factor alpha receptor 1/TNFRSF1A. The protein is Immunoglobulin G-binding protein A (spa) of Staphylococcus aureus (strain Mu50 / ATCC 700699).